The following is a 278-amino-acid chain: Hydroxyethylthiazole kinase (278 aa).

Met-46 lines the substrate pocket. 2 residues coordinate ATP: Arg-122 and Thr-168. Gly-195 contributes to the substrate binding site.

It belongs to the Thz kinase family. The cofactor is Mg(2+).

The enzyme catalyses 5-(2-hydroxyethyl)-4-methylthiazole + ATP = 4-methyl-5-(2-phosphooxyethyl)-thiazole + ADP + H(+). Its pathway is cofactor biosynthesis; thiamine diphosphate biosynthesis; 4-methyl-5-(2-phosphoethyl)-thiazole from 5-(2-hydroxyethyl)-4-methylthiazole: step 1/1. In terms of biological role, catalyzes the phosphorylation of the hydroxyl group of 4-methyl-5-beta-hydroxyethylthiazole (THZ). The protein is Hydroxyethylthiazole kinase of Chloroflexus aggregans (strain MD-66 / DSM 9485).